The chain runs to 142 residues: Anti-sigma F factor (142 aa).

This sequence belongs to the anti-sigma-factor family.

The catalysed reaction is L-seryl-[protein] + ATP = O-phospho-L-seryl-[protein] + ADP + H(+). It catalyses the reaction L-threonyl-[protein] + ATP = O-phospho-L-threonyl-[protein] + ADP + H(+). Binds to sigma F and blocks its ability to form an RNA polymerase holoenzyme (E-sigma F). Phosphorylates SpoIIAA on a serine residue. This phosphorylation may enable SpoIIAA to act as an anti-anti-sigma factor that counteracts SpoIIAB and thus releases sigma F from inhibition. This Clostridium kluyveri (strain NBRC 12016) protein is Anti-sigma F factor.